We begin with the raw amino-acid sequence, 532 residues long: FRIGIDA-like protein 4a (532 aa).

The interval 406–432 (KTEKRKPAAVPANKRTRASYNGPMPPA) is disordered.

This sequence belongs to the Frigida family. As to expression, expressed in leaves, shoot apex, flowers and during seed development.

This chain is FRIGIDA-like protein 4a (FRL4A), found in Arabidopsis thaliana (Mouse-ear cress).